The chain runs to 126 residues: Large ribosomal subunit protein bL17 (126 aa).

The protein belongs to the bacterial ribosomal protein bL17 family. Part of the 50S ribosomal subunit. Contacts protein L32.

This is Large ribosomal subunit protein bL17 from Magnetococcus marinus (strain ATCC BAA-1437 / JCM 17883 / MC-1).